A 453-amino-acid polypeptide reads, in one-letter code: Adenylyltransferase and sulfurtransferase MOCS3 (453 aa).

Position 62 is a phosphothreonine (threonine 62). Residues glycine 101, aspartate 122, 129–133 (SNFHR), lysine 146, and 190–191 (DN) each bind ATP. Cysteine 231 and cysteine 234 together coordinate Zn(2+). The active-site Glycyl thioester intermediate; for adenylyltransferase activity is cysteine 248. Residues cysteine 306 and cysteine 309 each contribute to the Zn(2+) site. The 97-residue stretch at 355–451 (QAQPHLLIDV…WTNSVDPSFP (97 aa)) folds into the Rhodanese domain. Cysteine 410 acts as the Cysteine persulfide intermediate; for sulfurtransferase activity in catalysis.

This sequence in the N-terminal section; belongs to the HesA/MoeB/ThiF family. UBA4 subfamily. Requires Zn(2+) as cofactor.

It localises to the cytoplasm. Its subcellular location is the cytosol. It catalyses the reaction [molybdopterin-synthase sulfur-carrier protein]-C-terminal Gly-Gly + ATP + H(+) = [molybdopterin-synthase sulfur-carrier protein]-C-terminal Gly-Gly-AMP + diphosphate. The catalysed reaction is [molybdopterin-synthase sulfur-carrier protein]-C-terminal Gly-Gly-AMP + S-sulfanyl-L-cysteinyl-[cysteine desulfurase] + AH2 = [molybdopterin-synthase sulfur-carrier protein]-C-terminal-Gly-aminoethanethioate + L-cysteinyl-[cysteine desulfurase] + A + AMP + 2 H(+). The protein operates within tRNA modification; 5-methoxycarbonylmethyl-2-thiouridine-tRNA biosynthesis. It participates in cofactor biosynthesis; molybdopterin biosynthesis. Functionally, plays a central role in 2-thiolation of mcm(5)S(2)U at tRNA wobble positions of cytosolic tRNA(Lys), tRNA(Glu) and tRNA(Gln). Also essential during biosynthesis of the molybdenum cofactor. Acts by mediating the C-terminal thiocarboxylation of sulfur carriers URM1 and MOCS2A. Its N-terminus first activates URM1 and MOCS2A as acyl-adenylates (-COAMP), then the persulfide sulfur on the catalytic cysteine is transferred to URM1 and MOCS2A to form thiocarboxylation (-COSH) of their C-terminus. The reaction probably involves hydrogen sulfide that is generated from the persulfide intermediate and that acts as a nucleophile towards URM1 and MOCS2A. Subsequently, a transient disulfide bond is formed. Does not use thiosulfate as sulfur donor; NFS1 probably acting as a sulfur donor for thiocarboxylation reactions. This is Adenylyltransferase and sulfurtransferase MOCS3 from Drosophila yakuba (Fruit fly).